The chain runs to 348 residues: Enkurin domain-containing protein 1 (348 aa).

Disordered regions lie at residues 1–65, 84–195, and 262–282; these read MCEG…RPGG, GGIS…PSAK, and AEAR…TRMP. Position 93 is a phosphoserine (Ser93). Positions 95 to 127 are enriched in basic and acidic residues; sequence KRKDPKDHEKENMRRIREIQRRFREQEHSREQG. Position 138 is a phosphoserine (Ser138). Basic and acidic residues predominate over residues 139–148; it reads PKYDKVESRV. One can recognise an Enkurin domain in the interval 253–345; the sequence is ERRDLWRREA…IFSRPKVFVK (93 aa).

As to quaternary structure, interacts with alpha-tubulin. Interacts (via central region) with CCP110 (via N-terminal region); competes with CEP97 for binding to CCP110.

It localises to the cytoplasm. The protein resides in the cytoskeleton. The protein localises to the microtubule organizing center. It is found in the centrosome. Its subcellular location is the centriole. It localises to the cilium basal body. The protein resides in the cell projection. The protein localises to the cilium. It is found in the spindle. Its subcellular location is the spindle pole. It localises to the cilium axoneme. In terms of biological role, microtubule-binding protein which regulates microtubule organization and stability. Promotes the stability of astral microtubules and facilitates the proper orientation of the mitotic spindle. This allows the oriented division of basal keratinocytes and contributes to epidermal stratification. Required for the assembly of both primary and motile cilia. Destabilizes the interaction between CCP110 and CEP97 by competing with CEP97 for binding to CCP110 which promotes the removal of CCP110 and CEP97 from the mother centriole and allows the initiation of ciliogenesis. In Bos taurus (Bovine), this protein is Enkurin domain-containing protein 1 (ENKD1).